Here is a 444-residue protein sequence, read N- to C-terminus: MLKYLFMIIFLIPICLLGNCWWLVHSLIFLLSFIFMISLYSYSDLSMISYYFGVDFYSFMLILLSLWICCLMITASSSIYSSSYHPNFFVFVVLLLLIMLFCSFSSLNLFSFYIFFESSLVPTLFLILGWGYQPERLQAGVYLMFYTLVASLPLLLVLFSINDLFNTLYYPLLIDFGSFYFLFYVFSIFAFLVKMPIFLFHLWLPKAHVEAPISGSMILAGILLKLGGYGIFRMMKVISCLGLSFNYFVLSLSLFGGVIISFVCFRQVDLKSLIAYSSVAHMSLVICGLMTMNWWGCMGSLSLMIGHGISSSGLFCLSNIIYELLGSRSLLINKGMINLMPSMTIWWFLLSSSNMASPPSLNLLGEFSLLNSIISWSSYMILLLIFLSFFSAVYTLYMYSYSQHGLYYSGVYTCSLGYFREYHLLFLHWFPLNLLCLKGEYFYF.

Transmembrane regions (helical) follow at residues 4–24 (YLFMIIFLIPICLLGNCWWLV), 28–48 (IFLLSFIFMISLYSYSDLSMI), 53–73 (GVDFYSFMLILLSLWICCLMI), 87–107 (NFFVFVVLLLLIMLFCSFSSL), 109–129 (LFSFYIFFESSLVPTLFLILG), 141–161 (VYLMFYTLVASLPLLLVLFSI), 173–193 (LIDFGSFYFLFYVFSIFAFLV), 212–232 (PISGSMILAGILLKLGGYGIF), 245–265 (FNYFVLSLSLFGGVIISFVCF), 272–294 (SLIAYSSVAHMSLVICGLMTMNW), 306–326 (GHGISSSGLFCLSNIIYELLG), 330–350 (LLINKGMINLMPSMTIWWFLL), and 373–393 (IISWSSYMILLLIFLSFFSAV).

This sequence belongs to the complex I subunit 4 family.

The protein resides in the mitochondrion membrane. The enzyme catalyses a ubiquinone + NADH + 5 H(+)(in) = a ubiquinol + NAD(+) + 4 H(+)(out). Core subunit of the mitochondrial membrane respiratory chain NADH dehydrogenase (Complex I) that is believed to belong to the minimal assembly required for catalysis. Complex I functions in the transfer of electrons from NADH to the respiratory chain. The immediate electron acceptor for the enzyme is believed to be ubiquinone. This Locusta migratoria (Migratory locust) protein is NADH-ubiquinone oxidoreductase chain 4 (ND4).